The sequence spans 491 residues: MKTFTWTLGVLFFLLVDTGHCRGGQFKIKKINQRRYPRATDGKEEAKKCAYTFLVPEQRITGPICVNTKGQDASTIKDMITRMDLENLKDVLSRQKREIDVLQLVVDVDGNIVNEVKLLRKESRNMNSRVTQLYMQLLHEIIRKRDNSLELSQLENKILNVTTEMLKMATRYRELEVKYASLTDLVNNQSVMITLLEEQCLRIFSRQDTHVSPPLVQVVPQHIPNSQQYTPGLLGGNEIQRDPGYPRDLMPPPDLATSPTKSPFKIPPVTFINEGPFKDCQQAKEAGHSVSGIYMIKPENSNGPMQLWCENSLDPGGWTVIQKRTDGSVNFFRNWENYKKGFGNIDGEYWLGLENIYMLSNQDNYKLLIELEDWSDKKVYAEYSSFRLEPESEFYRLRLGTYQGNAGDSMMWHNGKQFTTLDRDKDMYAGNCAHFHKGGWWYNACAHSNLNGVWYRGGHYRSKHQDGIFWAEYRGGSYSLRAVQMMIKPID.

Positions 1-23 (MKTFTWTLGVLFFLLVDTGHCRG) are cleaved as a signal peptide. The stretch at 80 to 168 (ITRMDLENLK…LNVTTEMLKM (89 aa)) forms a coiled coil. N-linked (GlcNAc...) asparagine glycosylation is found at N160 and N188. The Fibrinogen C-terminal domain occupies 271 to 491 (FINEGPFKDC…AVQMMIKPID (221 aa)). Cystine bridges form between C280–C309 and C432–C445.

In terms of tissue distribution, highly expressed in adrenal gland, placenta, thyroid gland, heart, skeletal muscle and small intestine. Weakly expressed in testis, ovary, colon, pancreas, kidney and stomach.

It localises to the secreted. In Homo sapiens (Human), this protein is Angiopoietin-related protein 1 (ANGPTL1).